The chain runs to 70 residues: DNA-directed RNA polymerase subunit epsilon (70 aa).

This sequence belongs to the RNA polymerase subunit epsilon family. In terms of assembly, RNAP is composed of a core of 2 alpha, a beta and a beta' subunit. The core is associated with a delta subunit, and at least one of epsilon or omega. When a sigma factor is associated with the core the holoenzyme is formed, which can initiate transcription.

The enzyme catalyses RNA(n) + a ribonucleoside 5'-triphosphate = RNA(n+1) + diphosphate. Its function is as follows. A non-essential component of RNA polymerase (RNAP). The sequence is that of DNA-directed RNA polymerase subunit epsilon from Enterococcus faecalis (strain ATCC 700802 / V583).